Reading from the N-terminus, the 839-residue chain is Taste receptor type 1 member 2 (839 aa).

The first 19 residues, 1–19, serve as a signal peptide directing secretion; the sequence is MGPRATTICSLFFLLWVLA. At 20 to 566 the chain is on the extracellular side; the sequence is EPAENSDFYL…AFLEWHEAPT (547 aa). Asparagine 84, asparagine 248, asparagine 292, asparagine 312, asparagine 368, asparagine 428, asparagine 487, and asparagine 527 each carry an N-linked (GlcNAc...) asparagine glycan. The helical transmembrane segment at 567-587 threads the bilayer; it reads IAVALLAALGFLSTLAILVIF. At 588-602 the chain is on the cytoplasmic side; the sequence is WRHFQTPMVRSAGGP. Residues 603–623 form a helical membrane-spanning segment; sequence MCFLMLTLLLVAYMVVPVYVG. Residues 624 to 635 lie on the Extracellular side of the membrane; sequence PPKVSTCLCRQA. Residues 636–656 traverse the membrane as a helical segment; that stretch reads LFPLCFTICISCIAVRSFQII. At 657-681 the chain is on the cytoplasmic side; it reads CAFKMASRFPRAYSYWVRYQGPYVS. Residues 682 to 702 form a helical membrane-spanning segment; sequence MAFITVLKMVIVVIGMLATGL. Residues 703 to 727 lie on the Extracellular side of the membrane; it reads NPTTRTDPDDPKIMIVSCNPNYRNS. A helical transmembrane segment spans residues 728 to 748; it reads LLFNTSLDLLLSVVGFSFANM. Residues 749–760 lie on the Cytoplasmic side of the membrane; it reads GKELPTNYNEAK. A helical transmembrane segment spans residues 761–781; it reads FITLSMTFYFTSSISLCTFMS. Residues 782-784 lie on the Extracellular side of the membrane; sequence AYS. The chain crosses the membrane as a helical span at residues 785-805; the sequence is GVLVTIVDLLVTVLNLLAISL. The Cytoplasmic portion of the chain corresponds to 806–839; sequence GYFGPKCYMILFYPERNTPAYFNSVIQGYTMTRD.

The protein belongs to the G-protein coupled receptor 3 family. TAS1R subfamily. Forms heterodimers with TAS1R3.

It is found in the cell membrane. In terms of biological role, putative taste receptor. TAS1R2/TAS1R3 recognizes diverse natural and synthetic sweeteners. In Pongo pygmaeus (Bornean orangutan), this protein is Taste receptor type 1 member 2 (TAS1R2).